Reading from the N-terminus, the 209-residue chain is Cytidylate kinase (209 aa).

7-15 (GVAASGKSS) serves as a coordination point for ATP.

The protein belongs to the cytidylate kinase family. Type 1 subfamily.

Its subcellular location is the cytoplasm. The catalysed reaction is CMP + ATP = CDP + ADP. It carries out the reaction dCMP + ATP = dCDP + ADP. The sequence is that of Cytidylate kinase from Deinococcus geothermalis (strain DSM 11300 / CIP 105573 / AG-3a).